The following is a 177-amino-acid chain: MSRVAKNPVKLPAGVEIKMSGQQLSVKGAKGALELNVHPSVEVIQEGGELRFAGRNGDQQTRAMAGTTRALVNNMVIGVSQGFERKLQLVGVGYKAQAKGQVLSLALGFSHPVDYELPQGVTAETPSQTDILIKGVDKQLVGQVAAEIRDFRRPEPYKGKGVRYSDEVVRRKEAKKK.

This sequence belongs to the universal ribosomal protein uL6 family. As to quaternary structure, part of the 50S ribosomal subunit.

In terms of biological role, this protein binds to the 23S rRNA, and is important in its secondary structure. It is located near the subunit interface in the base of the L7/L12 stalk, and near the tRNA binding site of the peptidyltransferase center. The protein is Large ribosomal subunit protein uL6 of Stutzerimonas stutzeri (strain A1501) (Pseudomonas stutzeri).